The following is a 1568-amino-acid chain: Myosin-2 (1568 aa).

The Myosin N-terminal SH3-like domain maps to 4–57 (EVGTRCWYPHKELGWIGAEVIKNEVKDGKYHLELSLEDDEVVSVDTEDLNDDKN). In terms of domain architecture, Myosin motor spans 70–783 (EATEDLTSLS…MLAYLEKLRS (714 aa)). Residue 164 to 171 (GESGAGKT) participates in ATP binding. Positions 443–523 (FIGVLDIYGF…LGILSLLDEE (81 aa)) are actin-binding. The disordered stretch occupies residues 619-641 (KKAELEQNNPGNKKPGPARTVNR). 6 consecutive IQ domains span residues 786 to 808 (MHNS…QYLK), 809 to 833 (ISQA…YHEM), 834 to 856 (KVHS…NVFN), 857 to 881 (VLIT…KREH), 882 to 904 (EYNA…TFLN), and 905 to 934 (TKRD…DAKS). Positions 944–1088 (KLENKVIELT…ISRLQTAMSL (145 aa)) form a coiled coil. A non alpha-helical, tail domain region spans residues 1089–1568 (GTVTTSVLPQ…VAQQVVQDGH (480 aa)). Residues 1223–1498 (AQVLTTIQKV…LRYVADIVKK (276 aa)) enclose the Dilute domain.

Belongs to the TRAFAC class myosin-kinesin ATPase superfamily. Myosin family. As to quaternary structure, homodimer. Interacts with calmodulin (CMD1) and the myosin light chain MLC1 through its IQ repeats.

In terms of biological role, myosin heavy chain that is required for the cell cycle-regulated transport of various organelles and proteins for their segregation. Functions by binding with its tail domain to receptor proteins on organelles and exerting force with its N-terminal motor domain against actin filaments, thereby transporting its cargo along polarized actin cables. The polypeptide is Myosin-2 (MYO2) (Saccharomyces uvarum (strain ATCC 76518 / CBS 7001 / CLIB 283 / NBRC 10550 / MCYC 623 / NCYC 2669 / NRRL Y-11845) (Yeast)).